The sequence spans 40 residues: Natriuretic peptide TNPd (40 aa).

Residues cysteine 9 and cysteine 25 are joined by a disulfide bond.

This sequence belongs to the natriuretic peptide family. As to expression, expressed by the venom gland.

Its subcellular location is the secreted. Functionally, snake venom natriuretic peptide that exhibits vasoactive and hypotensive activity. Stimulates cGMP production through the natriuretic peptide receptor 1 (NPR1) with very high potencies for the rat NPR1 (EC(50)=18 nM), and very weak potencies over human NPR1 (30% activation at 10 uM). This Oxyuranus microlepidotus (Inland taipan) protein is Natriuretic peptide TNPd.